We begin with the raw amino-acid sequence, 277 residues long: MEMO1 family protein TM_0087 (277 aa).

It belongs to the MEMO1 family.

In Thermotoga maritima (strain ATCC 43589 / DSM 3109 / JCM 10099 / NBRC 100826 / MSB8), this protein is MEMO1 family protein TM_0087.